The sequence spans 175 residues: Co-chaperone protein HscB homolog (175 aa).

In terms of domain architecture, J spans 7-79 (SHFDLFHLPA…LQRASYLLSL (73 aa)).

Belongs to the HscB family. Interacts with HscA and stimulates its ATPase activity.

In terms of biological role, co-chaperone involved in the maturation of iron-sulfur cluster-containing proteins. Seems to help targeting proteins to be folded toward HscA. This Burkholderia vietnamiensis (strain G4 / LMG 22486) (Burkholderia cepacia (strain R1808)) protein is Co-chaperone protein HscB homolog.